The chain runs to 528 residues: MAGCRLWVSLLLAAALACLATALWPWPQYIQTYHRRYTLYPNNFQFRYHVSSAAQAGCVVLDEAFRRYRNLLFGSGSWPRPSFSNKQQTLGKNILVVSVVTAECNEFPNLESVENYTLTINDDQCLLASETVWGALRGLETFSQLVWKSAEGTFFINKTKIKDFPRFPHRGVLLDTSRHYLPLSSILDTLDVMAYNKFNVFHWHLVDDSSFPYESFTFPELTRKGSFNPVTHIYTAQDVKEVIEYARLRGIRVLAEFDTPGHTLSWGPGAPGLLTPCYSGSHLSGTFGPVNPSLNSTYDFMSTLFLEISSVFPDFYLHLGGDEVDFTCWKSNPNIQAFMKKKGFTDFKQLESFYIQTLLDIVSDYDKGYVVWQEVFDNKVKVRPDTIIQVWREEMPVEYMLEMQDITRAGFRALLSAPWYLNRVKYGPDWKDMYKVEPLAFHGTPEQKALVIGGEACMWGEYVDSTNLVPRLWPRAGAVAERLWSSNLTTNIDFAFKRLSHFRCELVRRGIQAQPISVGYCEQEFEQT.

The first 22 residues, M1–A22, serve as a signal peptide directing secretion. Residues L23–Q88 constitute a propeptide that is removed on maturation. C58 and C104 are joined by a disulfide. 3 N-linked (GlcNAc...) asparagine glycosylation sites follow: N115, N157, and N295. The cysteines at positions 277 and 328 are disulfide-linked. E323 functions as the Proton donor in the catalytic mechanism. The interval N422–R423 is critical for hydrolysis GM2 gangliosides. N-linked (GlcNAc...) asparagine glycosylation is present at N487. An intrachain disulfide couples C504 to C521.

Belongs to the glycosyl hydrolase 20 family. In terms of assembly, there are 3 beta-hexosaminidase isozymes: isozyme A (hexosaminidase A) is a heterodimer composed of one subunit alpha and one subunit beta (chain A and B); isozyme B (hexosaminidase B) is a homodimer of two beta subunits (two chains A and B); isozyme S (hexosaminidase S) is a homodimer of two alpha subunits. The composition of the dimer (isozyme A versus isozyme S) has a significant effect on the substrate specificity of the alpha subunit active site. Ubiquitous. Most abundant in testis, adrenal, epididymis and heart. Low levels seen in the liver.

The protein localises to the lysosome. It carries out the reaction Hydrolysis of terminal non-reducing N-acetyl-D-hexosamine residues in N-acetyl-beta-D-hexosaminides.. The catalysed reaction is N-acetyl-beta-D-galactosaminyl-(1-&gt;4)-beta-D-3-sulfogalactosyl-(1-&gt;4)-beta-D-glucosyl-(1&lt;-&gt;1')-ceramide + H2O = a beta-D-3-sulfogalactosyl-(1-&gt;4)-beta-D-glucosyl-(1&lt;-&gt;1')-ceramide + N-acetyl-beta-D-galactosamine. The enzyme catalyses a ganglioside GM2 (d18:1(4E)) + H2O = a ganglioside GM3 (d18:1(4E)) + N-acetyl-beta-D-galactosamine. It catalyses the reaction a ganglioside GM2 + H2O = a ganglioside GM3 + N-acetyl-beta-D-galactosamine. It carries out the reaction beta-D-GalNAc-(1-&gt;4)-alpha-L-IdoA-(1-&gt;3)-beta-D-GalNAc-4-sulfate-(1-&gt;4)-alpha-L-IdoA-(1-&gt;3)-D-GalNAc-4-sulfate + H2O = alpha-L-IdoA-(1-&gt;3)-beta-D-GalNAc-4-sulfate-(1-&gt;4)-alpha-L-IdoA-(1-&gt;3)-D-GalNAc-4-sulfate + N-acetyl-D-galactosamine. The catalysed reaction is N-acetyl-beta-D-6-sulfogalactosaminyl-(1-&gt;4)-alpha-L-iduronyl-(1-&gt;3)-N-acetyl-D-6-sulfogalactosamine + H2O = alpha-L-iduronyl-(1-&gt;3)-N-acetyl-D-6-sulfogalactosamine + N-acetyl-D-6-sulfogalactosamine. With respect to regulation, addition of GM2A stimulates the hydrolysis of sulfated glycosphingolipid SM2 and the ganglioside GM2. Functionally, hydrolyzes the non-reducing end N-acetyl-D-hexosamine and/or sulfated N-acetyl-D-hexosamine of glycoconjugates, such as the oligosaccharide moieties from proteins and neutral glycolipids, or from certain mucopolysaccharides. The isozyme S is as active as the isozyme A on the anionic bis-sulfated glycans, the chondroitin-6-sulfate trisaccharide (C6S-3), and the dermatan sulfate pentasaccharide, and the sulfated glycosphingolipid SM2. The isozyme B does not hydrolyze each of these substrates, however hydrolyzes efficiently neutral oligosaccharide. Only the isozyme A is responsible for the degradation of GM2 gangliosides in the presence of GM2A. The sequence is that of Beta-hexosaminidase subunit alpha from Mus musculus (Mouse).